The sequence spans 456 residues: GTPase Der (456 aa).

EngA-type G domains follow at residues 4–169 and 178–353; these read PVVA…PSKD and VQLA…DQSR. Residues 10 to 17, 57 to 61, 120 to 123, 184 to 191, 231 to 235, and 296 to 299 contribute to the GTP site; these read GRPNVGKS, DTGGL, NKCE, DTAGI, and NKWD. Residues 354-439 form the KH-like domain; sequence RRVTTSVVNE…PIKLFWRGKQ (86 aa).

It belongs to the TRAFAC class TrmE-Era-EngA-EngB-Septin-like GTPase superfamily. EngA (Der) GTPase family. In terms of assembly, associates with the 50S ribosomal subunit.

In terms of biological role, GTPase that plays an essential role in the late steps of ribosome biogenesis. The protein is GTPase Der of Prochlorococcus marinus (strain NATL2A).